The primary structure comprises 300 residues: Cation-efflux pump FieF (300 aa).

4 helical membrane passes run 12–32 (AALS…FAWW), 40–60 (LAAL…LFVV), 82–102 (AALA…LTGF), and 114–134 (PSIG…LVTF). Positions 45 and 49 each coordinate Zn(2+). Positions 153 and 157 each coordinate Zn(2+). 2 helical membrane-spanning segments follow: residues 155-175 (QSDV…WYGF) and 178-198 (ADAL…LRMG).

Belongs to the cation diffusion facilitator (CDF) transporter (TC 2.A.4) family. FieF subfamily. In terms of assembly, homodimer.

It localises to the cell inner membrane. It carries out the reaction Zn(2+)(in) + H(+)(out) = Zn(2+)(out) + H(+)(in). It catalyses the reaction Cd(2+)(in) + H(+)(out) = Cd(2+)(out) + H(+)(in). The enzyme catalyses Fe(2+)(in) + H(+)(out) = Fe(2+)(out) + H(+)(in). In terms of biological role, divalent metal cation transporter which exports Zn(2+), Cd(2+) and possibly Fe(2+). May be involved in zinc and iron detoxification by efflux. The polypeptide is Cation-efflux pump FieF (Yersinia pestis bv. Antiqua (strain Antiqua)).